Consider the following 220-residue polypeptide: ATP synthase F(0) complex subunit a (220 aa).

Transmembrane regions (helical) follow at residues 12–32 (PTLL…TLLP), 69–89 (WAMI…FTPT), 91–111 (QLSL…LLGL), 130–150 (LLIP…PFAL), 158–178 (LTAG…LLPM), and 183–203 (ALLT…VAMI).

It belongs to the ATPase A chain family. As to quaternary structure, component of the ATP synthase complex composed at least of ATP5F1A/subunit alpha, ATP5F1B/subunit beta, ATP5MC1/subunit c (homooctomer), MT-ATP6/subunit a, MT-ATP8/subunit 8, ATP5ME/subunit e, ATP5MF/subunit f, ATP5MG/subunit g, ATP5MK/subunit k, ATP5MJ/subunit j, ATP5F1C/subunit gamma, ATP5F1D/subunit delta, ATP5F1E/subunit epsilon, ATP5PF/subunit F6, ATP5PB/subunit b, ATP5PD/subunit d, ATP5PO/subunit OSCP. ATP synthase complex consists of a soluble F(1) head domain (subunits alpha(3) and beta(3)) - the catalytic core - and a membrane F(0) domain - the membrane proton channel (subunits c, a, 8, e, f, g, k and j). These two domains are linked by a central stalk (subunits gamma, delta, and epsilon) rotating inside the F1 region and a stationary peripheral stalk (subunits F6, b, d, and OSCP). Interacts with DNAJC30; interaction is direct.

Its subcellular location is the mitochondrion inner membrane. The enzyme catalyses H(+)(in) = H(+)(out). In terms of biological role, subunit a, of the mitochondrial membrane ATP synthase complex (F(1)F(0) ATP synthase or Complex V) that produces ATP from ADP in the presence of a proton gradient across the membrane which is generated by electron transport complexes of the respiratory chain. ATP synthase complex consist of a soluble F(1) head domain - the catalytic core - and a membrane F(1) domain - the membrane proton channel. These two domains are linked by a central stalk rotating inside the F(1) region and a stationary peripheral stalk. During catalysis, ATP synthesis in the catalytic domain of F(1) is coupled via a rotary mechanism of the central stalk subunits to proton translocation. With the subunit c (ATP5MC1), forms the proton-conducting channel in the F(0) domain, that contains two crucial half-channels (inlet and outlet) that facilitate proton movement from the mitochondrial intermembrane space (IMS) into the matrix. Protons are taken up via the inlet half-channel and released through the outlet half-channel, following a Grotthuss mechanism. This is ATP synthase F(0) complex subunit a from Latimeria chalumnae (Coelacanth).